The primary structure comprises 287 residues: 2-dehydro-3-deoxyphosphooctonate aldolase (287 aa).

Belongs to the KdsA family.

It localises to the cytoplasm. It carries out the reaction D-arabinose 5-phosphate + phosphoenolpyruvate + H2O = 3-deoxy-alpha-D-manno-2-octulosonate-8-phosphate + phosphate. The protein operates within carbohydrate biosynthesis; 3-deoxy-D-manno-octulosonate biosynthesis; 3-deoxy-D-manno-octulosonate from D-ribulose 5-phosphate: step 2/3. It functions in the pathway bacterial outer membrane biogenesis; lipopolysaccharide biosynthesis. This chain is 2-dehydro-3-deoxyphosphooctonate aldolase, found in Rhodopseudomonas palustris (strain TIE-1).